Here is a 368-residue protein sequence, read N- to C-terminus: MAIKSIASRLRGSRRFLSGFVAGAVVGAAGAGLAALQFFRSQGAEGALTGKQPDGSAEKAVLEQFGFPLTGTEARCYTNHALSYDQAKRVPRWVLEHISKSKIMGDADRKHCKFKPDPNIPPTFSAFNEDYVGSGWSRGHMAPAGNNKFSSKAMAETFYLSNIVPQDFDNNSGYWNRIEMYCRELTERFEDVWVVSGPLTLPQTRGDGKKIVSYQVIGEDNVAVPSHLYKVILARRSSVSTEPLALGAFVVPNEAIGFQPQLTEFQVSLQDLEKLSGLVFFPHLDRTSDIRNICSVDTCKLLDFQEFTLYLSTRKIEGARSVLRLEKIMENLKNAEIEPDDYFMSRYEKKLEELKAKEQSGTQIRKPS.

The N-terminal 41 residues, 1 to 41 (MAIKSIASRLRGSRRFLSGFVAGAVVGAAGAGLAALQFFRS), are a transit peptide targeting the mitochondrion. His-140 serves as the catalytic Proton acceptor. Asn-171 is an a divalent metal cation binding site.

This sequence belongs to the DNA/RNA non-specific endonuclease family. Homodimer. A divalent metal cation is required as a cofactor. Ubiquitous.

It is found in the mitochondrion inner membrane. Endo/exonuclease with nicking activity towards supercoiled DNA, a preference for single-stranded DNA and 5'-3' exonuclease activity. In Homo sapiens (Human), this protein is Nuclease EXOG, mitochondrial (EXOG).